Reading from the N-terminus, the 286-residue chain is E3 ubiquitin-protein ligase SINA-like 7 (286 aa).

The segment at 51–87 (CPICYEAFTIPIFQCDNGHLACSSCCPKLNNKCPACT) adopts an RING-type zinc-finger fold. The tract at residues 101–285 (VLESILIPCP…MRISVKKLNK (185 aa)) is SBD. The segment at 104 to 162 (SILIPCPNAKLGCKKNVSYGKELTHEKECMFSHCACPALDCNYTSSYKDLYTHYRITHM) adopts an SIAH-type zinc-finger fold. Zn(2+) is bound by residues Cys-109, Cys-116, His-128, Cys-132, Cys-139, Cys-144, His-156, and His-161.

The protein belongs to the SINA (Seven in absentia) family.

The enzyme catalyses S-ubiquitinyl-[E2 ubiquitin-conjugating enzyme]-L-cysteine + [acceptor protein]-L-lysine = [E2 ubiquitin-conjugating enzyme]-L-cysteine + N(6)-ubiquitinyl-[acceptor protein]-L-lysine.. It functions in the pathway protein modification; protein ubiquitination. Functionally, E3 ubiquitin-protein ligase that mediates ubiquitination and subsequent proteasomal degradation of target proteins. E3 ubiquitin ligases accept ubiquitin from an E2 ubiquitin-conjugating enzyme in the form of a thioester and then directly transfers the ubiquitin to targeted substrates. It probably triggers the ubiquitin-mediated degradation of different substrates. The protein is E3 ubiquitin-protein ligase SINA-like 7 of Arabidopsis thaliana (Mouse-ear cress).